A 210-amino-acid chain; its full sequence is Syntaxin-binding protein 6 (210 aa).

Ser2 is subject to N-acetylserine. The v-SNARE coiled-coil homology domain maps to 151 to 210 (GNSILHSAADSVTSAVQKASQALNERGERLGRAEEKTEDMKNSAQQFAETAHKLAMKHKC).

As to quaternary structure, part of a ternary complex containing SNAP25 and STX1A that can be dissociated by NAPA and NSF. Interacts with STX4A.

It localises to the cytoplasm. Its subcellular location is the membrane. In terms of biological role, forms non-fusogenic complexes with SNAP25 and STX1A and may thereby modulate the formation of functional SNARE complexes and exocytosis. This Mus musculus (Mouse) protein is Syntaxin-binding protein 6 (Stxbp6).